A 1174-amino-acid polypeptide reads, in one-letter code: Fanconi anemia group J protein homolog (1174 aa).

Residues 11–445 (GGVKIHFPCR…KSHEPLRDVC (435 aa)) form the Helicase ATP-binding domain. Residues 101–126 (NLDTSPHFNSPSKPSSGRNGVSTPCQ) are compositionally biased toward polar residues. Disordered regions lie at residues 101 to 160 (NLDT…EKKR) and 187 to 208 (LASEKRVKPESPIGKSFSDRKD). Low complexity predominate over residues 134 to 143 (LAAKLSAKKQ). Positions 158–175 (KKRIRPLETTQQIRKRHC) match the Nuclear localization signal motif. Position 185 to 192 (185 to 192 (ARLASEKR)) interacts with ATP. 4 residues coordinate [4Fe-4S] cluster: C286, C301, C313, and C353. A DEAH box motif is present at residues 393-396 (VILD). The tract at residues 888–1063 (SRRHQKVTNR…SNETADTSLG (176 aa)) is interaction with BRCA1. 2 stretches are compositionally biased toward polar residues: residues 923–935 (TSVSESSHQSPEN) and 990–1001 (SRSSSPTFGKQT). Disordered regions lie at residues 923-1001 (TSVS…GKQT) and 1102-1155 (LSPG…SSHS). Phosphoserine occurs at positions 929, 932, and 994. Positions 1138-1147 (DTNEENGELV) are enriched in acidic residues. K1174 carries the N6-acetyllysine modification.

It belongs to the DEAD box helicase family. DEAH subfamily. As to quaternary structure, binds directly to the BRCT domains of BRCA1. Interacts with the CIA complex components CIAO1, CIAO2B and MMS19. Requires [4Fe-4S] cluster as cofactor. Phosphorylated. Phosphorylation is necessary for interaction with BRCA1, and is cell-cycle regulated.

The protein localises to the nucleus. The protein resides in the cytoplasm. The catalysed reaction is Couples ATP hydrolysis with the unwinding of duplex DNA at the replication fork by translocating in the 5'-3' direction. This creates two antiparallel DNA single strands (ssDNA). The leading ssDNA polymer is the template for DNA polymerase III holoenzyme which synthesizes a continuous strand.. The enzyme catalyses ATP + H2O = ADP + phosphate + H(+). Functionally, DNA-dependent helicase and 5' to 3' DNA helicase required for the maintenance of chromosomal stability. Acts late in the Fanconi anemia pathway, after FANCD2 ubiquitination. Involved in the repair of DNA double-strand breaks by homologous recombination in a manner that depends on its association with BRCA1. Involved in the repair of abasic sites at replication forks by promoting the degradation of DNA-protein cross-links: acts by catalyzing unfolding of HMCES DNA-protein cross-link via its helicase activity, exposing the underlying DNA and enabling cleavage of the DNA-protein adduct by the SPRTN metalloprotease. Can unwind RNA:DNA hybrids and G-quadruplex DNA. This Mus musculus (Mouse) protein is Fanconi anemia group J protein homolog.